The primary structure comprises 609 residues: MSTGFNAQSFLRTVSSSAGVYRMYDVKGDVIYVGKAKDLKKRLSSYFRKNLGNVKTQALVSHIHHIDVTLTHSETDALLLENDYIKQYMPKYNVLLRDDKSYPYIFLSQHEHPRLAYHRGPQREKGYYFGPYPNGGAVRESLHLMQKLFPIRQCDDLYYKSRTRPCLQYQLSRCSAPCVGKVSNAEYDEQVKLASLFLKGKDKQVISELVAKMEEAAEQQAYEQAARFRDQIMALRRVAEQQEVSGNTGDMDVIGVHYASGIACFHLLFIREGKIFGSRSYYPTVPAQTDIEEVLRSFLLQFYLNADIQRTIPKEVVISHHFEELHELEAAVSEALNKKFSIKTNVRADRASFLRLALTNATNAVMTRLSHKNTVEQRFVLLEEILELNAPIQRMECFDISHTMGESTVASCVVFNREGPHKAEYRRYNIEGITPGDDYAAMKQAISRRFDKIDASGKIPDILFIDGGLGQLRIAQQIVDEKFVNLDKAPQLIGVAKGESRKPGLETLIFGDTESSFSLEDDSPALHLIQHIRDESHRFAITGHRNRRQKTRNTSTLESIPGIGPKRRKALLQHLGGLQEVKGASVAELAKVPGISIEMAQTIHDALRG.

The region spanning 16-94 (SSAGVYRMYD…IKQYMPKYNV (79 aa)) is the GIY-YIG domain. Positions 203 to 238 (KQVISELVAKMEEAAEQQAYEQAARFRDQIMALRRV) constitute a UVR domain.

Belongs to the UvrC family. As to quaternary structure, interacts with UvrB in an incision complex.

It localises to the cytoplasm. In terms of biological role, the UvrABC repair system catalyzes the recognition and processing of DNA lesions. UvrC both incises the 5' and 3' sides of the lesion. The N-terminal half is responsible for the 3' incision and the C-terminal half is responsible for the 5' incision. This is UvrABC system protein C from Shewanella sp. (strain MR-4).